We begin with the raw amino-acid sequence, 289 residues long: Rhodopsin (289 aa).

Over 1-7 the chain is Extracellular; that stretch reads YLVNPAA. Residues 8–32 form a helical membrane-spanning segment; it reads YAALGAYMFLLILIGFPVNFLTLYV. Over 33-44 the chain is Cytoplasmic; sequence TLEHKKLRTPLN. The chain crosses the membrane as a helical span at residues 45–67; that stretch reads YILLNLAVADLFMVLGGFTTTMY. At 68–81 the chain is on the extracellular side; it reads TSMHGYFVLGRLGC. A disulfide bond links C81 and C158. A helical membrane pass occupies residues 82-104; the sequence is NLEGFFATLGGEIALWSLVVLAI. A 'Ionic lock' involved in activated form stabilization motif is present at residues 105–107; sequence ERW. At 105–123 the chain is on the cytoplasmic side; it reads ERWIVVCKPISNFRFTEDH. A helical transmembrane segment spans residues 124–144; it reads AIMGLAFSWVMALSCSVPPLV. The Extracellular portion of the chain corresponds to 145 to 173; the sequence is GWSRYIPEAMQCSCGVDYYTRAEGFNTES. The chain crosses the membrane as a helical span at residues 174–195; the sequence is FVLYMFTVHFLIPLSVIFFCYG. Residues 196 to 223 lie on the Cytoplasmic side of the membrane; that stretch reads RLLCAVKEAAAAQQESETTQRSEKEVSR. Residues 224-245 form a helical membrane-spanning segment; that stretch reads MVVLMVIGFLVCWLPYASTAWW. Topologically, residues 246–257 are extracellular; it reads IFCNQGSEFGPV. The helical transmembrane segment at 258-279 threads the bilayer; it reads FMTIPAFFAKSSAIYNPMIYIC. K267 is modified (N6-(retinylidene)lysine). At 280–289 the chain is on the cytoplasmic side; the sequence is MNKQFRHCMI.

This sequence belongs to the G-protein coupled receptor 1 family. Opsin subfamily. Phosphorylated on some or all of the serine and threonine residues present in the C-terminal region. In terms of processing, contains one covalently linked retinal chromophore.

The protein localises to the membrane. It is found in the cell projection. The protein resides in the cilium. Its subcellular location is the photoreceptor outer segment. Photoreceptor required for image-forming vision at low light intensity. While most salt water fish species use retinal as chromophore, most freshwater fish use 3-dehydroretinal, or a mixture of retinal and 3-dehydroretinal. Light-induced isomerization of 11-cis to all-trans retinal triggers a conformational change that activates signaling via G-proteins. Subsequent receptor phosphorylation mediates displacement of the bound G-protein alpha subunit by arrestin and terminates signaling. This chain is Rhodopsin (rho), found in Comephorus dybowskii.